The primary structure comprises 501 residues: Lysine--tRNA ligase (501 aa).

Positions 411 and 418 each coordinate Mg(2+).

It belongs to the class-II aminoacyl-tRNA synthetase family. Homodimer. The cofactor is Mg(2+).

The protein resides in the cytoplasm. It catalyses the reaction tRNA(Lys) + L-lysine + ATP = L-lysyl-tRNA(Lys) + AMP + diphosphate. This Clostridium perfringens (strain ATCC 13124 / DSM 756 / JCM 1290 / NCIMB 6125 / NCTC 8237 / Type A) protein is Lysine--tRNA ligase.